We begin with the raw amino-acid sequence, 302 residues long: RuBisCO operon transcriptional regulator (302 aa).

One can recognise an HTH lysR-type domain in the interval 1-60; that stretch reads MHVSLRQLRVFEAVARHNSYTRAAEELHLSQPAVSMQVRQLEDEIGLSLFERLGKQVVLT. The segment at residues 20-39 is a DNA-binding region (H-T-H motif); it reads YTRAAEELHLSQPAVSMQVR.

The protein belongs to the LysR transcriptional regulatory family.

Functionally, trans-acting transcriptional regulator of RuBisCO genes (rbcAB) expression. The protein is RuBisCO operon transcriptional regulator (rbcR) of Allochromatium vinosum (Chromatium vinosum).